The primary structure comprises 123 residues: UPF0102 protein Dole_2298 (123 aa).

The protein belongs to the UPF0102 family.

This is UPF0102 protein Dole_2298 from Desulfosudis oleivorans (strain DSM 6200 / JCM 39069 / Hxd3) (Desulfococcus oleovorans).